The following is a 486-amino-acid chain: Aspartyl/glutamyl-tRNA(Asn/Gln) amidotransferase subunit B (486 aa).

The protein belongs to the GatB/GatE family. GatB subfamily. In terms of assembly, heterotrimer of A, B and C subunits.

It carries out the reaction L-glutamyl-tRNA(Gln) + L-glutamine + ATP + H2O = L-glutaminyl-tRNA(Gln) + L-glutamate + ADP + phosphate + H(+). The catalysed reaction is L-aspartyl-tRNA(Asn) + L-glutamine + ATP + H2O = L-asparaginyl-tRNA(Asn) + L-glutamate + ADP + phosphate + 2 H(+). Functionally, allows the formation of correctly charged Asn-tRNA(Asn) or Gln-tRNA(Gln) through the transamidation of misacylated Asp-tRNA(Asn) or Glu-tRNA(Gln) in organisms which lack either or both of asparaginyl-tRNA or glutaminyl-tRNA synthetases. The reaction takes place in the presence of glutamine and ATP through an activated phospho-Asp-tRNA(Asn) or phospho-Glu-tRNA(Gln). This is Aspartyl/glutamyl-tRNA(Asn/Gln) amidotransferase subunit B from Leptospira borgpetersenii serovar Hardjo-bovis (strain L550).